Here is a 3763-residue protein sequence, read N- to C-terminus: Colossin-B (3763 aa).

Positions 1–19 (MKGSIFLLFIFQIFKFSSS) are cleaved as a signal peptide. N43, N110, N258, and N284 each carry an N-linked (GlcNAc...) asparagine glycan. In terms of domain architecture, Follistatin-like 1 spans 619–643 (DCSTLQCPSGYECKLDKNSKTRGCI). Residues N652 and N672 are each glycosylated (N-linked (GlcNAc...) asparagine). 2 consecutive Follistatin-like domains span residues 701–724 (HCRNVDCPKSHYCKIQRNGLPRCF) and 729–752 (PCEFVSCDCNLECRVTSCGDAKCF). The tract at residues 792–832 (PPIFYETPSPTSAPPTETPSPTDTPTDKPTIPPTPTPTPSK) is disordered. Positions 810 to 820 (PSPTDTPTDKP) are enriched in low complexity. Residues N845 and N991 are each glycosylated (N-linked (GlcNAc...) asparagine). 2 disordered regions span residues 1033–1068 (LGSSGSGSSGNSGSSGSGGSSNDSTESQWSSESESS) and 1095–1124 (PQPTPSTDIPTTTTTTTSTSTTGPIEPTST). The span at 1036 to 1051 (SGSGSSGNSGSSGSGG) shows a compositional bias: gly residues. Low complexity-rich tracts occupy residues 1052–1068 (SSNDSTESQWSSESESS) and 1099–1124 (PSTDIPTTTTTTTSTSTTGPIEPTST). N1054 is a glycosylation site (N-linked (GlcNAc...) asparagine). A CNA-B 1 domain is found at 1159–1227 (VSGVEITLIQ…LLNKYPIDTS (69 aa)). 2 N-linked (GlcNAc...) asparagine glycosylation sites follow: N1229 and N1247. In terms of domain architecture, CNA-B 2 spans 1304 to 1373 (IKGIQVTLKD…VYTMDTFQLS (70 aa)). N1381 carries N-linked (GlcNAc...) asparagine glycosylation. CNA-B domains are found at residues 1437–1515 (LPGV…IDTK), 1582–1648 (VPGI…LTLD), and 1731–1809 (VGGV…FTLS). N1769 and N1815 each carry an N-linked (GlcNAc...) asparagine glycan. The disordered stretch occupies residues 1883 to 1955 (GSTVDGGTSV…SEQPPEDSME (73 aa)). Residues 1898–1948 (STSTTTVSSSPSSSSDIGSSSDISSEVSSSLSSSPSSSEQPSEQSSSSSEQ) show a composition bias toward low complexity. The 69-residue stretch at 2015–2083 (VPDVTVTLVN…DPLSGKIDFN (69 aa)) folds into the CNA-B 6 domain. N-linked (GlcNAc...) asparagine glycans are attached at residues N2128, N2145, N2243, N2294, N2351, N2378, N2453, N2493, N2496, N2516, N2572, N2601, N2624, N2668, N2698, N2714, N2781, N2787, N2800, N2838, and N2858. One can recognise a CNA-B 7 domain in the interval 2143-2197 (FPNITVRLFDQNLQPVLDNFNIQVEPTVTNALGQYYFDNLHSGSYIVKFEVPTRY). One can recognise a CNA-B 8 domain in the interval 2292 to 2345 (VPNVTVEIFNPTGQQVYNINELLIGSTTTDSNGYYLFDEIQPGSYIIKFSNIPN). The CNA-B 9 domain maps to 2453–2477 (NTTTTDQNGLYYFDNLSPGLYKLLF). Residues 2713–2766 (VNGTIVTLLDINGNTMVDADSYPINSYTTGPDGYYKFDDFSFGKYIITFSGVPD) form the CNA-B 10 domain. One can recognise a CNA-B 11 domain in the interval 2984 to 3061 (LGGVVVTLYN…DSNASPVDGY (78 aa)). Residues N3083, N3130, N3372, N3390, N3459, N3466, N3557, N3666, N3676, and N3681 are each glycosylated (N-linked (GlcNAc...) asparagine). The CNA-B 12 domain maps to 3128–3201 (YPNITVSIYT…TKTGVNLGII (74 aa)). The 70-residue stretch at 3664–3733 (MANITVQLFS…NDKRDLEKIN (70 aa)) folds into the CNA-B 13 domain.

It belongs to the serine-aspartate repeat-containing protein (SDr) family.

The protein localises to the secreted. This chain is Colossin-B (colB), found in Dictyostelium discoideum (Social amoeba).